We begin with the raw amino-acid sequence, 385 residues long: Lipoyl synthase, mitochondrial (385 aa).

[4Fe-4S] cluster-binding residues include Cys-107, Cys-112, Cys-118, Cys-137, Cys-141, Cys-144, and Ser-352. A Radical SAM core domain is found at Lys-122–Leu-341.

This sequence belongs to the radical SAM superfamily. Lipoyl synthase family. [4Fe-4S] cluster is required as a cofactor.

It localises to the mitochondrion. It carries out the reaction [[Fe-S] cluster scaffold protein carrying a second [4Fe-4S](2+) cluster] + N(6)-octanoyl-L-lysyl-[protein] + 2 oxidized [2Fe-2S]-[ferredoxin] + 2 S-adenosyl-L-methionine + 4 H(+) = [[Fe-S] cluster scaffold protein] + N(6)-[(R)-dihydrolipoyl]-L-lysyl-[protein] + 4 Fe(3+) + 2 hydrogen sulfide + 2 5'-deoxyadenosine + 2 L-methionine + 2 reduced [2Fe-2S]-[ferredoxin]. It participates in protein modification; protein lipoylation via endogenous pathway; protein N(6)-(lipoyl)lysine from octanoyl-[acyl-carrier-protein]: step 2/2. Functionally, catalyzes the radical-mediated insertion of two sulfur atoms into the C-6 and C-8 positions of the octanoyl moiety bound to the lipoyl domains of lipoate-dependent enzymes, thereby converting the octanoylated domains into lipoylated derivatives. This chain is Lipoyl synthase, mitochondrial, found in Meyerozyma guilliermondii (strain ATCC 6260 / CBS 566 / DSM 6381 / JCM 1539 / NBRC 10279 / NRRL Y-324) (Yeast).